A 454-amino-acid polypeptide reads, in one-letter code: Gastrin/cholecystokinin type B receptor (454 aa).

Over 1 to 57 (MELLKPNRSVLGSGPGPGASLCRSGGPLLNGSGTGNLSCEPPRIRGAGTRELELAIR) the chain is Extracellular. Residues asparagine 7, asparagine 30, and asparagine 36 are each glycosylated (N-linked (GlcNAc...) asparagine). Residues 58-79 (VTLYAVIFLMSVGGNVLIIVVL) form a helical membrane-spanning segment. The Cytoplasmic segment spans residues 80–87 (GLSRRLRT). A helical membrane pass occupies residues 88–109 (VTNAFLLSLAVSDLLLAVACMP). The Extracellular portion of the chain corresponds to 110–131 (FTLLPNLMGTFIFGTVVCKAVS). Residues cysteine 127 and cysteine 205 are joined by a disulfide bond. Residues 132–150 (YFMGVSVSVSTLSLVAIAL) form a helical membrane-spanning segment. Residues 151-170 (ERYSAICRPLQARVWQTRSH) are Cytoplasmic-facing. A helical transmembrane segment spans residues 171 to 189 (AARVIVATWMLSGLLMVPY). Topologically, residues 190 to 219 (PVYTAVQPAGPRVLQCMHRWPSARVRQTWS) are extracellular. A helical membrane pass occupies residues 220–242 (VLLLLLLFFVPGVVMAVAYGLIS). Topologically, residues 243-340 (RELYLGLRFD…KLLAKKRVVR (98 aa)) are cytoplasmic. The interval 257–284 (SESQSRVGSQGGLPGGTGQGPAQANGRC) is disordered. Residues 265–275 (SQGGLPGGTGQ) show a composition bias toward gly residues. A helical transmembrane segment spans residues 341–362 (MLLVIVVLFFLCWLPVYSANTW). Residues 363-380 (RAFDGPGAHRALSGAPIS) are Extracellular-facing. The chain crosses the membrane as a helical span at residues 381 to 401 (FIHLLTYASACVNPLVYCFMH). At 402–454 (RRFRQACLDTCTRCCPRPPRARPRPLPDEDPPTPSIASLSRLSYTTISTLGPG) the chain is on the cytoplasmic side. Cysteine 415 is lipidated: S-palmitoyl cysteine. Residues 422-441 (ARPRPLPDEDPPTPSIASLS) are disordered.

The protein belongs to the G-protein coupled receptor 1 family.

Its subcellular location is the cell membrane. Its function is as follows. Receptor for gastrin and cholecystokinin. The CCK-B receptors occur throughout the central nervous system where they modulate anxiety, analgesia, arousal, and neuroleptic activity. This receptor mediates its action by association with G proteins that activate a phosphatidylinositol-calcium second messenger system. In Bos taurus (Bovine), this protein is Gastrin/cholecystokinin type B receptor (CCKBR).